Reading from the N-terminus, the 363-residue chain is NAD(P)H-quinone oxidoreductase subunit 1, chloroplastic (363 aa).

A run of 6 helical transmembrane segments spans residues 30–50 (LVPI…IVWL), 98–118 (FSIG…VIPF), 129–149 (IGIF…LMSG), 248–268 (YSGI…LLSS), 300–320 (IIGT…FLFI), and 343–363 (FLLP…LLSL).

This sequence belongs to the complex I subunit 1 family. As to quaternary structure, NDH is composed of at least 16 different subunits, 5 of which are encoded in the nucleus.

It is found in the plastid. Its subcellular location is the chloroplast thylakoid membrane. The enzyme catalyses a plastoquinone + NADH + (n+1) H(+)(in) = a plastoquinol + NAD(+) + n H(+)(out). It catalyses the reaction a plastoquinone + NADPH + (n+1) H(+)(in) = a plastoquinol + NADP(+) + n H(+)(out). NDH shuttles electrons from NAD(P)H:plastoquinone, via FMN and iron-sulfur (Fe-S) centers, to quinones in the photosynthetic chain and possibly in a chloroplast respiratory chain. The immediate electron acceptor for the enzyme in this species is believed to be plastoquinone. Couples the redox reaction to proton translocation, and thus conserves the redox energy in a proton gradient. The polypeptide is NAD(P)H-quinone oxidoreductase subunit 1, chloroplastic (Gossypium barbadense (Sea Island cotton)).